The following is a 626-amino-acid chain: Putative Xaa-Pro dipeptidyl-peptidase (626 aa).

Active-site charge relay system residues include S231, D348, and H379.

It belongs to the peptidase S15 family.

The enzyme catalyses Hydrolyzes Xaa-Pro-|- bonds to release unblocked, N-terminal dipeptides from substrates including Ala-Pro-|-p-nitroanilide and (sequentially) Tyr-Pro-|-Phe-Pro-|-Gly-Pro-|-Ile.. This chain is Putative Xaa-Pro dipeptidyl-peptidase, found in Rhodopirellula baltica (strain DSM 10527 / NCIMB 13988 / SH1).